An 83-amino-acid chain; its full sequence is Putative defensin-like protein 67 (83 aa).

Residues 1-24 (MGSSKLMVTCIVVAMLTISCDILS) form the signal peptide. Cystine bridges form between C38-C82, C42-C65, C51-C80, and C55-C81.

Belongs to the DEFL family.

Its subcellular location is the secreted. In Arabidopsis thaliana (Mouse-ear cress), this protein is Putative defensin-like protein 67.